A 264-amino-acid chain; its full sequence is Mannose-specific lectin CEA (264 aa).

An N-terminal signal peptide occupies residues 1–23 (MAKLLLFLLPAILGLLVPRSAVA). Bulb-type lectin domains follow at residues 26–131 (TNYL…PWVP) and 145–252 (NNLL…PQAK). Residues 51–55 (QDDCN), Tyr59, Trp63, Gln64, 170–174 (QGDCN), Tyr178, and 182–185 (YGWQ) contribute to the beta-D-mannose site. Residues 51–59 (QDDCNLVLY) carry the Carbohydrate-binding motif 1 motif. 2 cysteine pairs are disulfide-bonded: Cys54–Cys74 and Cys173–Cys195. The Carbohydrate-binding motif 2 motif lies at 170-178 (QGDCNLVLY).

As to quaternary structure, forms heterotetramer of 2 chains 1 and 2 chains 2 arranged as a dimer of chain 1 and chain 2 heterodimers.

The protein localises to the secreted. Its function is as follows. Mannose-specific lectin. Shows agglutinating activity towards erythrocytes from rabbit. Has insecticidal activity against cotton aphids and other hemipteran insects. This Colocasia esculenta (Wild taro) protein is Mannose-specific lectin CEA.